Consider the following 155-residue polypeptide: Probable calcium-binding protein CML44 (155 aa).

3 consecutive EF-hand domains span residues 6–41, 85–120, and 130–155; these read ITTN…LGWA, DNDE…LGFE, and RMIR…ILHV. Ca(2+) is bound by residues Asp-19, Asn-21, Asp-23, Glu-30, Asp-98, Asn-100, Asp-102, Tyr-104, and Glu-109.

Its function is as follows. Potential calcium sensor. The sequence is that of Probable calcium-binding protein CML44 (CML44) from Arabidopsis thaliana (Mouse-ear cress).